A 101-amino-acid polypeptide reads, in one-letter code: Large ribosomal subunit protein uL24 (101 aa).

This sequence belongs to the universal ribosomal protein uL24 family. As to quaternary structure, part of the 50S ribosomal subunit.

Its function is as follows. One of two assembly initiator proteins, it binds directly to the 5'-end of the 23S rRNA, where it nucleates assembly of the 50S subunit. One of the proteins that surrounds the polypeptide exit tunnel on the outside of the subunit. The protein is Large ribosomal subunit protein uL24 of Clostridioides difficile (strain 630) (Peptoclostridium difficile).